Reading from the N-terminus, the 394-residue chain is 2-oxoglutarate and iron-dependent oxygenase domain-containing protein CP2 (394 aa).

The disordered stretch occupies residues 1–35; that stretch reads MSSEQREGSQETTTTTVEGNGTIAGQNSHSAAPTT. The span at 17 to 35 shows a compositional bias: polar residues; sequence VEGNGTIAGQNSHSAAPTT. Residues 248 to 347 enclose the Fe2OG dioxygenase domain; it reads DSHHGFVVEY…RVNMLLWCRS (100 aa). Fe cation contacts are provided by His268, Asp270, and His328. Arg338 contacts 2-oxoglutarate.

Fe(2+) is required as a cofactor. Requires L-ascorbate as cofactor. Expressed in roots, cotyledons, rosette leaves, cauline leaves, inflorescences and siliques.

Its subcellular location is the nucleus. It localises to the nucleoplasm. In terms of biological role, participates in the epigenetic repression of flowering genes in association with ICU11. Functions in the repression of several members of the MADS-box transcription factors family, including SEP3, during vegetative development via histone modification. The chain is 2-oxoglutarate and iron-dependent oxygenase domain-containing protein CP2 from Arabidopsis thaliana (Mouse-ear cress).